Reading from the N-terminus, the 155-residue chain is Pathogenesis-related protein 2 (155 aa).

Belongs to the BetVI family.

This chain is Pathogenesis-related protein 2, found in Phaseolus vulgaris (Kidney bean).